Consider the following 118-residue polypeptide: Large ribosomal subunit protein bL20 (118 aa).

It belongs to the bacterial ribosomal protein bL20 family.

Functionally, binds directly to 23S ribosomal RNA and is necessary for the in vitro assembly process of the 50S ribosomal subunit. It is not involved in the protein synthesizing functions of that subunit. This is Large ribosomal subunit protein bL20 from Aliarcobacter butzleri (strain RM4018) (Arcobacter butzleri).